A 520-amino-acid polypeptide reads, in one-letter code: Ubiquitin carboxyl-terminal hydrolase MINDY-1 (520 aa).

Residues M1–M155 are disordered. Over residues K26 to K37 the composition is skewed to basic and acidic residues. Polar residues predominate over residues T43 to K54. The segment covering A77–K86 has biased composition (low complexity). Composition is skewed to polar residues over residues V93–M112 and S132–E146. C189 acts as the Nucleophile in catalysis. H371 serves as the catalytic Proton acceptor. Disordered regions lie at residues S422–Q441 and E467–L520. The tract at residues Q441–Q479 is ubiquitin-binding domain (UBD). Low complexity predominate over residues A469–Q498. Residues K511–L520 are compositionally biased toward basic and acidic residues.

The protein belongs to the MINDY deubiquitinase family. FAM63 subfamily.

It catalyses the reaction Thiol-dependent hydrolysis of ester, thioester, amide, peptide and isopeptide bonds formed by the C-terminal Gly of ubiquitin (a 76-residue protein attached to proteins as an intracellular targeting signal).. Hydrolase that can specifically remove 'Lys-48'-linked conjugated ubiquitin from proteins. May play a regulatory role at the level of protein turnover. This chain is Ubiquitin carboxyl-terminal hydrolase MINDY-1 (mindy1), found in Danio rerio (Zebrafish).